A 490-amino-acid chain; its full sequence is Cytochrome P450 2C26 (490 aa).

Cys-435 serves as a coordination point for heme.

This sequence belongs to the cytochrome P450 family. Requires heme as cofactor.

It localises to the endoplasmic reticulum membrane. The protein resides in the microsome membrane. The catalysed reaction is an organic molecule + reduced [NADPH--hemoprotein reductase] + O2 = an alcohol + oxidized [NADPH--hemoprotein reductase] + H2O + H(+). Functionally, catalyzes the hydroxylation of tolbutamide and the N-demethylation of aminopyrine and benzphetamine. The polypeptide is Cytochrome P450 2C26 (CYP2C26) (Mesocricetus auratus (Golden hamster)).